We begin with the raw amino-acid sequence, 400 residues long: Tryptophan synthase beta chain (400 aa).

Lysine 92 bears the N6-(pyridoxal phosphate)lysine mark.

It belongs to the TrpB family. Tetramer of two alpha and two beta chains. Pyridoxal 5'-phosphate serves as cofactor.

The catalysed reaction is (1S,2R)-1-C-(indol-3-yl)glycerol 3-phosphate + L-serine = D-glyceraldehyde 3-phosphate + L-tryptophan + H2O. It functions in the pathway amino-acid biosynthesis; L-tryptophan biosynthesis; L-tryptophan from chorismate: step 5/5. Its function is as follows. The beta subunit is responsible for the synthesis of L-tryptophan from indole and L-serine. The chain is Tryptophan synthase beta chain from Neisseria meningitidis serogroup B (strain ATCC BAA-335 / MC58).